We begin with the raw amino-acid sequence, 474 residues long: Trehalose-6-phosphate synthase (474 aa).

Arg10 is a D-glucose 6-phosphate binding site. UDP-alpha-D-glucose is bound at residue 22 to 23; that stretch reads GG. D-glucose 6-phosphate contacts are provided by Tyr77 and Asp131. Arg263 and Lys268 together coordinate UDP-alpha-D-glucose. Arg301 contributes to the D-glucose 6-phosphate binding site. UDP-alpha-D-glucose contacts are provided by residues Phe340 and 366-370; that span reads LVAKE.

It belongs to the glycosyltransferase 20 family. Homotetramer.

The enzyme catalyses D-glucose 6-phosphate + UDP-alpha-D-glucose = alpha,alpha-trehalose 6-phosphate + UDP + H(+). It functions in the pathway glycan biosynthesis; trehalose biosynthesis. Its function is as follows. Probably involved in the osmoprotection via the biosynthesis of trehalose. Catalyzes the transfer of glucose from UDP-alpha-D-glucose (UDP-Glc) to D-glucose 6-phosphate (Glc-6-P) to form trehalose-6-phosphate. Acts with retention of the anomeric configuration of the UDP-sugar donor. This Escherichia coli O1:K1 / APEC protein is Trehalose-6-phosphate synthase.